The primary structure comprises 62 residues: MFTLKKSLLLLFFLGTISLSLCEQERGADEEENGGEVTEQEVKRNVLSSVANGINRALSFFG.

The N-terminal stretch at 1–22 (MFTLKKSLLLLFFLGTISLSLC) is a signal peptide. Positions 23–44 (EQERGADEEENGGEVTEQEVKR) are excised as a propeptide.

The protein belongs to the frog skin active peptide (FSAP) family. Amolopin subfamily. As to expression, expressed by the skin glands.

The protein resides in the secreted. In terms of biological role, antimicrobial peptide with activity against Gram-positive bacteria. Has been tested against S.aureus (MIC=37.5 ug/mL), against B.pumilus (MIC=75.0 ug/mL), B.cereus (no activity detected). Does not show activity against Gram-negative bacteria (E.coli, B.dysenteriae, A.calcoaceticus, P.aeruginosa) and fungi (C.albicans). Does not show hemolytic activity against rabbit erythrocytes. This chain is Amolopin-P2, found in Amolops loloensis (Lolokou Sucker Frog).